We begin with the raw amino-acid sequence, 156 residues long: Small ribosomal subunit protein uS7 (156 aa).

The protein belongs to the universal ribosomal protein uS7 family. As to quaternary structure, part of the 30S ribosomal subunit. Contacts proteins S9 and S11.

Its function is as follows. One of the primary rRNA binding proteins, it binds directly to 16S rRNA where it nucleates assembly of the head domain of the 30S subunit. Is located at the subunit interface close to the decoding center, probably blocks exit of the E-site tRNA. The polypeptide is Small ribosomal subunit protein uS7 (Dictyoglomus turgidum (strain DSM 6724 / Z-1310)).